The chain runs to 212 residues: Deoxyribose-phosphate aldolase (212 aa).

Asp-89 (proton donor/acceptor) is an active-site residue. Lys-151 serves as the catalytic Schiff-base intermediate with acetaldehyde. Residue Lys-180 is the Proton donor/acceptor of the active site.

The protein belongs to the DeoC/FbaB aldolase family. DeoC type 1 subfamily.

Its subcellular location is the cytoplasm. The enzyme catalyses 2-deoxy-D-ribose 5-phosphate = D-glyceraldehyde 3-phosphate + acetaldehyde. Its pathway is carbohydrate degradation; 2-deoxy-D-ribose 1-phosphate degradation; D-glyceraldehyde 3-phosphate and acetaldehyde from 2-deoxy-alpha-D-ribose 1-phosphate: step 2/2. Its function is as follows. Catalyzes a reversible aldol reaction between acetaldehyde and D-glyceraldehyde 3-phosphate to generate 2-deoxy-D-ribose 5-phosphate. The chain is Deoxyribose-phosphate aldolase from Clostridium botulinum (strain Loch Maree / Type A3).